The primary structure comprises 509 residues: MERAENARIIQKPMTRRTVDYGSGLSKYIVNRHLRSNRYHIHVPRPNPNQIINLYPPYEYKYNNTSSLCTKYIHTSANKARHVINVVRWTPDGRRLLTGSSTGEFTLWNGLTFNFELINQSHDYAVRCAEWSTDGRWLISGDGGGMVKYFEPNLNNVKIVQAHEMEVRDVAFSPNDSKFVTASDDGSLKVWNFHMSTEELKLTGHGWDVKTVDWHPSKGLLASGSKDNLVKFWDPRTGTCIATLHGHKNTIMQASFQKNFGSNYLATVSRDSTCRVFDLRAMKDVRVLRGHEKDVNCVTWHPLYPNLLTTGGSDGSVNHYSLDEPPLLSQQKYHEKHPNVTLSASSYLLYPTAEIPFAHDLGIWSMQYHPLGHLLCTGSNDKTTRFWSRSRPDDKESTMDRHHLGEEQSEAMLSQRKAAIEEDDNYEPDENPLTETLANAHNPQFSGVLNLPGLGTMPSFPSPYQHGQPQIPGMLHASLSNSYAEPSTQNSFIPGLTSKSQDGYPQNYR.

7 WD repeats span residues 72–109 (YIHT…TLWN), 113–151 (FNFE…KYFE), 156–192 (NVKI…KVWN), 196–234 (STEE…KFWD), 238–278 (GTCI…RVFD), 282–321 (MKDV…NHYS), and 350–388 (YPTA…RFWS). Disordered regions lie at residues 385–409 (RFWS…EEQS) and 480–509 (SNSY…QNYR). Positions 390-406 (SRPDDKESTMDRHHLGE) are enriched in basic and acidic residues.

Its subcellular location is the nucleus. Functionally, required for 3'-end cleavage and polyadenylation of pre-mRNAs. Also involved in chromosome segregation where it has a role in chromosome attachment to the mitotic spindle. The chain is Polyadenylation factor subunit 2 (pfs2) from Schizosaccharomyces pombe (strain 972 / ATCC 24843) (Fission yeast).